The primary structure comprises 148 residues: MFDVTLLILLGLAALGFVSHNTTVAVSILVLIIVRVTPLSTFFPWIEKQGLTIGIIILTIGVMAPIASGSLPPSTLIHSFFNWKSLVAIAVGVIVSWLGGRGVTLMGSQPQLVAGLLVGTVLGVALFRGVPVGPLIAAGLVSLIVGKQ.

Helical transmembrane passes span 14–34 (ALGF…LIIV), 51–71 (LTIG…SGSL), 80–100 (FFNW…WLGG), and 121–141 (VLGV…AGLV).

The protein belongs to the UPF0756 family.

The protein resides in the cell membrane. This chain is UPF0756 membrane protein YeaL, found in Escherichia fergusonii (strain ATCC 35469 / DSM 13698 / CCUG 18766 / IAM 14443 / JCM 21226 / LMG 7866 / NBRC 102419 / NCTC 12128 / CDC 0568-73).